A 132-amino-acid polypeptide reads, in one-letter code: RING-H2 finger protein ATL39 (132 aa).

The chain crosses the membrane as a helical span at residues 10-30; the sequence is TIVFAFASIGFIAFYIINYYI. The RING-type; atypical zinc-finger motif lies at 85 to 127; the sequence is CVVCLNEFKDDETLRLVPPCVHVFHADCVDIWLSHSSTCPICR.

It belongs to the RING-type zinc finger family. ATL subfamily.

The protein resides in the membrane. The enzyme catalyses S-ubiquitinyl-[E2 ubiquitin-conjugating enzyme]-L-cysteine + [acceptor protein]-L-lysine = [E2 ubiquitin-conjugating enzyme]-L-cysteine + N(6)-ubiquitinyl-[acceptor protein]-L-lysine.. The protein operates within protein modification; protein ubiquitination. This chain is RING-H2 finger protein ATL39 (ATL39), found in Arabidopsis thaliana (Mouse-ear cress).